The following is a 235-amino-acid chain: Iron-sulfur cluster co-chaperone protein HscB (235 aa).

A divalent metal cation contacts are provided by Cys41, Cys44, Cys58, and Cys61. The J domain occupies 72–144 (DYFSLMDCNR…LSRGLYLLKL (73 aa)).

Belongs to the HscB family. Interacts with ISCU and HSPA9 to form an iron-sulfur transfer complex. Interacts with SDHAF1 (via the first LYR motif); the interaction recruits the iron-sulfur transfer complex composed of HSC20, HSPA9 and ISCU and mediates the incorporation of iron-sulfur clusters into SDHB which also interacts with HSC20. Interacts with the cytoplasmic form of ISCU and with CIA complex member CIAO1 (via LYR motif). In terms of assembly, homodimer. Interacts with ISCU (cytoplasmic form); this interaction stabilizes the (Fe-S) clusters on ISCU. Interacts with the CIA complex member CIAO1 (via LYR motif). Expressed in lung, brain, stomach, spleen, ovary, testis, liver, muscle and heart.

The protein localises to the cytoplasm. The protein resides in the mitochondrion. It functions in the pathway cofactor biosynthesis; iron-sulfur cluster biosynthesis. Its function is as follows. Acts as a co-chaperone in iron-sulfur cluster assembly in mitochondria. Required for incorporation of iron-sulfur clusters into SDHB, the iron-sulfur protein subunit of succinate dehydrogenase that is involved in complex II of the mitochondrial electron transport chain. Recruited to SDHB by interaction with SDHAF1 which first binds SDHB and then recruits the iron-sulfur transfer complex formed by HSC20, HSPA9 and ISCU through direct binding to HSC20. Plays an essential role in hematopoiesis. Functionally, acts as a co-chaperone in iron-sulfur cluster assembly in the cytoplasm. Also mediates complex formation between components of the cytosolic iron-sulfur biogenesis pathway and the CIA targeting complex composed of CIAO1, DIPK1B/FAM69B and MMS19 by binding directly to the scaffold protein ISCU and to CIAO1. This facilitates iron-sulfur cluster insertion into a number of cytoplasmic and nuclear proteins including POLD1, ELP3, DPYD and PPAT. In Homo sapiens (Human), this protein is Iron-sulfur cluster co-chaperone protein HscB.